The sequence spans 498 residues: ATP synthase subunit beta, chloroplastic (498 aa).

An ATP-binding site is contributed by 172 to 179 (GGAGVGKT).

This sequence belongs to the ATPase alpha/beta chains family. F-type ATPases have 2 components, CF(1) - the catalytic core - and CF(0) - the membrane proton channel. CF(1) has five subunits: alpha(3), beta(3), gamma(1), delta(1), epsilon(1). CF(0) has four main subunits: a(1), b(1), b'(1) and c(9-12).

The protein localises to the plastid. Its subcellular location is the chloroplast thylakoid membrane. It catalyses the reaction ATP + H2O + 4 H(+)(in) = ADP + phosphate + 5 H(+)(out). Functionally, produces ATP from ADP in the presence of a proton gradient across the membrane. The catalytic sites are hosted primarily by the beta subunits. The protein is ATP synthase subunit beta, chloroplastic of Salacca zalacca (Snake palm).